Reading from the N-terminus, the 154-residue chain is Prefoldin subunit 5 (154 aa).

The residue at position 2 (Ala-2) is an N-acetylalanine. Lys-42 is modified (N6-acetyllysine). Residue Ser-56 is modified to Phosphoserine.

This sequence belongs to the prefoldin subunit alpha family. In terms of assembly, heterohexamer of two PFD-alpha type and four PFD-beta type subunits.

It localises to the nucleus. In terms of biological role, binds specifically to cytosolic chaperonin (c-CPN) and transfers target proteins to it. Binds to nascent polypeptide chain and promotes folding in an environment in which there are many competing pathways for nonnative proteins. Represses the transcriptional activity of MYC. This is Prefoldin subunit 5 (Pfdn5) from Mus musculus (Mouse).